A 212-amino-acid polypeptide reads, in one-letter code: 3,4-dihydroxy-2-butanone 4-phosphate synthase (212 aa).

D-ribulose 5-phosphate contacts are provided by residues 37-38, Asp-42, 150-154, and Glu-174; these read RE and RRGHT. Residue Glu-38 participates in Mg(2+) binding. His-153 contributes to the Mg(2+) binding site.

This sequence belongs to the DHBP synthase family. In terms of assembly, homodimer. It depends on Mg(2+) as a cofactor. The cofactor is Mn(2+).

It carries out the reaction D-ribulose 5-phosphate = (2S)-2-hydroxy-3-oxobutyl phosphate + formate + H(+). It functions in the pathway cofactor biosynthesis; riboflavin biosynthesis; 2-hydroxy-3-oxobutyl phosphate from D-ribulose 5-phosphate: step 1/1. Functionally, catalyzes the conversion of D-ribulose 5-phosphate to formate and 3,4-dihydroxy-2-butanone 4-phosphate. The sequence is that of 3,4-dihydroxy-2-butanone 4-phosphate synthase from Histophilus somni (strain 129Pt) (Haemophilus somnus).